The chain runs to 457 residues: Multidrug resistance protein MdtK (457 aa).

The next 12 membrane-spanning stretches (helical) occupy residues 11–31 (LLAL…MGFV), 53–73 (IWLP…PVIA), 93–113 (WLAG…GYII), 127–147 (AVGY…FQVA), 160–180 (GMVM…IFIY), 189–209 (GGVG…LAMV), 243–263 (LPIA…ALLV), 276–296 (IALN…AAVT), 314–334 (AART…IFTV), 350–370 (VVTL…SDSI), 387–407 (IFYI…YILA), and 418–438 (PAGF…MMML).

Belongs to the multi antimicrobial extrusion (MATE) (TC 2.A.66.1) family. MdtK subfamily.

Its subcellular location is the cell inner membrane. Its function is as follows. Multidrug efflux pump that functions probably as a Na(+)/drug antiporter. The chain is Multidrug resistance protein MdtK from Escherichia coli O127:H6 (strain E2348/69 / EPEC).